The primary structure comprises 319 residues: Phospho-N-acetylmuramoyl-pentapeptide-transferase (319 aa).

10 helical membrane passes run M1 to M21, T53 to W73, L77 to W97, F117 to Q137, F140 to F160, G172 to Q192, T195 to N215, I221 to V241, L249 to F269, and G298 to L318.

This sequence belongs to the glycosyltransferase 4 family. MraY subfamily. Mg(2+) is required as a cofactor.

The protein resides in the cell membrane. The catalysed reaction is UDP-N-acetyl-alpha-D-muramoyl-L-alanyl-gamma-D-glutamyl-L-lysyl-D-alanyl-D-alanine + di-trans,octa-cis-undecaprenyl phosphate = Mur2Ac(oyl-L-Ala-gamma-D-Glu-L-Lys-D-Ala-D-Ala)-di-trans,octa-cis-undecaprenyl diphosphate + UMP. Its pathway is cell wall biogenesis; peptidoglycan biosynthesis. Its function is as follows. Catalyzes the initial step of the lipid cycle reactions in the biosynthesis of the cell wall peptidoglycan: transfers peptidoglycan precursor phospho-MurNAc-pentapeptide from UDP-MurNAc-pentapeptide onto the lipid carrier undecaprenyl phosphate, yielding undecaprenyl-pyrophosphoryl-MurNAc-pentapeptide, known as lipid I. The sequence is that of Phospho-N-acetylmuramoyl-pentapeptide-transferase from Limosilactobacillus fermentum (strain NBRC 3956 / LMG 18251) (Lactobacillus fermentum).